Consider the following 98-residue polypeptide: Large ribosomal subunit protein bL25 (98 aa).

Residues 1–23 (MANFVLNAQARAEDKQGKGASRR) are disordered.

Belongs to the bacterial ribosomal protein bL25 family. In terms of assembly, part of the 50S ribosomal subunit; part of the 5S rRNA/L5/L18/L25 subcomplex. Contacts the 5S rRNA. Binds to the 5S rRNA independently of L5 and L18.

In terms of biological role, this is one of the proteins that binds to the 5S RNA in the ribosome where it forms part of the central protuberance. The protein is Large ribosomal subunit protein bL25 of Acinetobacter baumannii (strain AB307-0294).